A 388-amino-acid polypeptide reads, in one-letter code: Formate-dependent phosphoribosylglycinamide formyltransferase (388 aa).

N(1)-(5-phospho-beta-D-ribosyl)glycinamide-binding positions include 20-21 (EL) and Glu-80. ATP is bound by residues Arg-112, Lys-153, 158–163 (SSGKGQ), 193–196 (EEFV), and Glu-201. The ATP-grasp domain occupies 117–306 (RLASEKLGLR…EFEIHVRSIL (190 aa)). Residues Glu-265 and Glu-277 each coordinate Mg(2+). Residues Asp-284, Lys-352, and 359–360 (RR) each bind N(1)-(5-phospho-beta-D-ribosyl)glycinamide.

This sequence belongs to the PurK/PurT family. Homodimer.

The enzyme catalyses N(1)-(5-phospho-beta-D-ribosyl)glycinamide + formate + ATP = N(2)-formyl-N(1)-(5-phospho-beta-D-ribosyl)glycinamide + ADP + phosphate + H(+). The protein operates within purine metabolism; IMP biosynthesis via de novo pathway; N(2)-formyl-N(1)-(5-phospho-D-ribosyl)glycinamide from N(1)-(5-phospho-D-ribosyl)glycinamide (formate route): step 1/1. Its function is as follows. Involved in the de novo purine biosynthesis. Catalyzes the transfer of formate to 5-phospho-ribosyl-glycinamide (GAR), producing 5-phospho-ribosyl-N-formylglycinamide (FGAR). Formate is provided by PurU via hydrolysis of 10-formyl-tetrahydrofolate. The protein is Formate-dependent phosphoribosylglycinamide formyltransferase of Methanococcus vannielii (strain ATCC 35089 / DSM 1224 / JCM 13029 / OCM 148 / SB).